A 444-amino-acid polypeptide reads, in one-letter code: Methylenetetrahydrofolate--tRNA-(uracil-5-)-methyltransferase TrmFO (444 aa).

Glycine 10–glycine 15 provides a ligand contact to FAD.

Belongs to the MnmG family. TrmFO subfamily. FAD is required as a cofactor.

It is found in the cytoplasm. The catalysed reaction is uridine(54) in tRNA + (6R)-5,10-methylene-5,6,7,8-tetrahydrofolate + NADH + H(+) = 5-methyluridine(54) in tRNA + (6S)-5,6,7,8-tetrahydrofolate + NAD(+). It carries out the reaction uridine(54) in tRNA + (6R)-5,10-methylene-5,6,7,8-tetrahydrofolate + NADPH + H(+) = 5-methyluridine(54) in tRNA + (6S)-5,6,7,8-tetrahydrofolate + NADP(+). In terms of biological role, catalyzes the folate-dependent formation of 5-methyl-uridine at position 54 (M-5-U54) in all tRNAs. The polypeptide is Methylenetetrahydrofolate--tRNA-(uracil-5-)-methyltransferase TrmFO (Streptococcus pneumoniae serotype 4 (strain ATCC BAA-334 / TIGR4)).